The sequence spans 305 residues: Sodium/potassium-transporting ATPase subunit beta-1 (305 aa).

Residues 1–32 (MAREKSTDDGGGWKKFLWDSEKKQVLGRTGTS) lie on the Cytoplasmic side of the membrane. The chain crosses the membrane as a helical; Signal-anchor for type II membrane protein span at residues 33 to 53 (WFKIFVFYLIFYGCLAGIFIG). Topologically, residues 54-305 (TIQVMLLTIS…RFEVKIEVKS (252 aa)) are extracellular. N-linked (GlcNAc...) asparagine glycosylation occurs at Asn114. Cys127 and Cys150 are joined by a disulfide. Asn159 carries N-linked (GlcNAc...) asparagine glycosylation. The cysteines at positions 160 and 176 are disulfide-linked. Asn194 and Asn267 each carry an N-linked (GlcNAc...) asparagine glycan. Residues Cys215 and Cys278 are joined by a disulfide bond.

It belongs to the X(+)/potassium ATPases subunit beta family. The sodium/potassium-transporting ATPase is composed of a catalytic alpha subunit, an auxiliary non-catalytic beta subunit and an additional regulatory subunit.

The protein localises to the cell membrane. Functionally, this is the non-catalytic component of the active enzyme, which catalyzes the hydrolysis of ATP coupled with the exchange of Na(+) and K(+) ions across the plasma membrane. The beta subunit regulates, through assembly of alpha/beta heterodimers, the number of sodium pumps transported to the plasma membrane. This is Sodium/potassium-transporting ATPase subunit beta-1 (atp1b1) from Tetronarce californica (Pacific electric ray).